Here is a 344-residue protein sequence, read N- to C-terminus: Outer membrane protein A (344 aa).

The Periplasmic segment spans residues 1 to 14; it reads MKAIFVLNAAPKDN. A beta stranded transmembrane segment spans residues 15 to 24; that stretch reads TWYAGGKLGW. Over 25–49 the chain is Extracellular; that stretch reads SQYHDTGFYGNGFQNNNGPTRNDQL. A beta stranded transmembrane segment spans residues 50–59; that stretch reads GAGAFGGYQV. At 60–62 the chain is on the periplasmic side; the sequence is NPY. The chain crosses the membrane as a beta stranded span at residues 63–71; that stretch reads LGFEMGYDW. The Extracellular segment spans residues 72–89; it reads LGRMAYKGSVDNGAFKAQ. Residues 90–100 form a beta stranded membrane-spanning segment; it reads GVQLTAKLGYP. Over 101–104 the chain is Periplasmic; the sequence is ITDD. A beta stranded transmembrane segment spans residues 105-114; that stretch reads LDIYTRLGGM. At 115-139 the chain is on the extracellular side; sequence VWRADSKGNYASTGVSRSEHDTGVS. A beta stranded transmembrane segment spans residues 140-149; sequence PVFAGGVEWA. Residues 150 to 153 are Periplasmic-facing; that stretch reads VTRD. A beta stranded transmembrane segment spans residues 154 to 162; the sequence is IATRLEYQW. Topologically, residues 163-179 are extracellular; sequence VNNIGDAGTVGTRPDNG. A beta stranded transmembrane segment spans residues 180 to 188; the sequence is MLSLGVSYR. At 189 to 344 the chain is on the periplasmic side; it reads FGQEDAAPVV…YKEVVTQPQA (156 aa). A run of 4 repeats spans residues 199-200, 201-202, 203-204, and 205-206. Residues 199–206 are 4 X 2 AA tandem repeats of A-P; sequence APAPAPAP. The region spanning 208–336 is the OmpA-like domain; that stretch reads VATKHFTLKS…RVEIEVKGYK (129 aa). C309 and C321 form a disulfide bridge.

It belongs to the outer membrane OOP (TC 1.B.6) superfamily. OmpA family. In terms of assembly, monomer and homodimer.

The protein localises to the cell outer membrane. In terms of biological role, with TolR probably plays a role in maintaining the position of the peptidoglycan cell wall in the periplasm. Acts as a porin with low permeability that allows slow penetration of small solutes; an internal gate slows down solute passage. Required for conjugation with F-type plasmids; probably serves as the mating receptor on recipient cells. In Klebsiella pneumoniae, this protein is Outer membrane protein A.